The following is a 638-amino-acid chain: 1-deoxy-D-xylulose-5-phosphate synthase (638 aa).

Residues His79 and Gly120–Ser122 each bind thiamine diphosphate. Asp151 lines the Mg(2+) pocket. Thiamine diphosphate contacts are provided by residues Gly152–Ala153, Asn182, Tyr291, and Glu373. Asn182 is a Mg(2+) binding site.

It belongs to the transketolase family. DXPS subfamily. Homodimer. Requires Mg(2+) as cofactor. It depends on thiamine diphosphate as a cofactor.

The enzyme catalyses D-glyceraldehyde 3-phosphate + pyruvate + H(+) = 1-deoxy-D-xylulose 5-phosphate + CO2. It functions in the pathway metabolic intermediate biosynthesis; 1-deoxy-D-xylulose 5-phosphate biosynthesis; 1-deoxy-D-xylulose 5-phosphate from D-glyceraldehyde 3-phosphate and pyruvate: step 1/1. In terms of biological role, catalyzes the acyloin condensation reaction between C atoms 2 and 3 of pyruvate and glyceraldehyde 3-phosphate to yield 1-deoxy-D-xylulose-5-phosphate (DXP). In Xanthomonas oryzae pv. oryzae (strain MAFF 311018), this protein is 1-deoxy-D-xylulose-5-phosphate synthase.